A 375-amino-acid chain; its full sequence is 4-hydroxy-3-methylbut-2-en-1-yl diphosphate synthase (flavodoxin) (375 aa).

The [4Fe-4S] cluster site is built by cysteine 270, cysteine 273, cysteine 305, and glutamate 312.

It belongs to the IspG family. The cofactor is [4Fe-4S] cluster.

The catalysed reaction is (2E)-4-hydroxy-3-methylbut-2-enyl diphosphate + oxidized [flavodoxin] + H2O + 2 H(+) = 2-C-methyl-D-erythritol 2,4-cyclic diphosphate + reduced [flavodoxin]. The protein operates within isoprenoid biosynthesis; isopentenyl diphosphate biosynthesis via DXP pathway; isopentenyl diphosphate from 1-deoxy-D-xylulose 5-phosphate: step 5/6. Functionally, converts 2C-methyl-D-erythritol 2,4-cyclodiphosphate (ME-2,4cPP) into 1-hydroxy-2-methyl-2-(E)-butenyl 4-diphosphate. This chain is 4-hydroxy-3-methylbut-2-en-1-yl diphosphate synthase (flavodoxin), found in Yersinia pestis (strain Pestoides F).